The sequence spans 466 residues: Asparagine--tRNA ligase (466 aa).

Belongs to the class-II aminoacyl-tRNA synthetase family. In terms of assembly, homodimer.

The protein resides in the cytoplasm. It catalyses the reaction tRNA(Asn) + L-asparagine + ATP = L-asparaginyl-tRNA(Asn) + AMP + diphosphate + H(+). This chain is Asparagine--tRNA ligase, found in Escherichia coli O139:H28 (strain E24377A / ETEC).